The primary structure comprises 557 residues: Dihydroxy-acid dehydratase (557 aa).

Asp78 is a Mg(2+) binding site. Cys119 provides a ligand contact to [2Fe-2S] cluster. Positions 120 and 121 each coordinate Mg(2+). Position 121 is an N6-carboxylysine (Lys121). Residue Cys192 coordinates [2Fe-2S] cluster. Glu442 is a Mg(2+) binding site. Catalysis depends on Ser468, which acts as the Proton acceptor.

The protein belongs to the IlvD/Edd family. Homodimer. [2Fe-2S] cluster serves as cofactor. The cofactor is Mg(2+).

It carries out the reaction (2R)-2,3-dihydroxy-3-methylbutanoate = 3-methyl-2-oxobutanoate + H2O. It catalyses the reaction (2R,3R)-2,3-dihydroxy-3-methylpentanoate = (S)-3-methyl-2-oxopentanoate + H2O. It participates in amino-acid biosynthesis; L-isoleucine biosynthesis; L-isoleucine from 2-oxobutanoate: step 3/4. Its pathway is amino-acid biosynthesis; L-valine biosynthesis; L-valine from pyruvate: step 3/4. Its function is as follows. Functions in the biosynthesis of branched-chain amino acids. Catalyzes the dehydration of (2R,3R)-2,3-dihydroxy-3-methylpentanoate (2,3-dihydroxy-3-methylvalerate) into 2-oxo-3-methylpentanoate (2-oxo-3-methylvalerate) and of (2R)-2,3-dihydroxy-3-methylbutanoate (2,3-dihydroxyisovalerate) into 2-oxo-3-methylbutanoate (2-oxoisovalerate), the penultimate precursor to L-isoleucine and L-valine, respectively. The polypeptide is Dihydroxy-acid dehydratase (Bacillus cereus (strain 03BB102)).